Here is a 126-residue protein sequence, read N- to C-terminus: Aspartate 1-decarboxylase (126 aa).

The active-site Schiff-base intermediate with substrate; via pyruvic acid is the Ser-25. At Ser-25 the chain carries Pyruvic acid (Ser). Thr-57 contacts substrate. Tyr-58 functions as the Proton donor in the catalytic mechanism. Position 73 to 75 (73 to 75) interacts with substrate; it reads GAA.

Belongs to the PanD family. As to quaternary structure, heterooctamer of four alpha and four beta subunits. Pyruvate serves as cofactor. Is synthesized initially as an inactive proenzyme, which is activated by self-cleavage at a specific serine bond to produce a beta-subunit with a hydroxyl group at its C-terminus and an alpha-subunit with a pyruvoyl group at its N-terminus.

The protein localises to the cytoplasm. The catalysed reaction is L-aspartate + H(+) = beta-alanine + CO2. Its pathway is cofactor biosynthesis; (R)-pantothenate biosynthesis; beta-alanine from L-aspartate: step 1/1. Catalyzes the pyruvoyl-dependent decarboxylation of aspartate to produce beta-alanine. This Photorhabdus laumondii subsp. laumondii (strain DSM 15139 / CIP 105565 / TT01) (Photorhabdus luminescens subsp. laumondii) protein is Aspartate 1-decarboxylase.